The chain runs to 302 residues: Pyridoxal 5'-phosphate synthase subunit PdxS (302 aa).

Aspartate 32 serves as a coordination point for D-ribose 5-phosphate. The active-site Schiff-base intermediate with D-ribose 5-phosphate is the lysine 89. Position 161 (glycine 161) interacts with D-ribose 5-phosphate. Arginine 173 provides a ligand contact to D-glyceraldehyde 3-phosphate. Residues glycine 222 and 243 to 244 (GS) each bind D-ribose 5-phosphate. The interval 278–302 (GIGKGMKGQSNEDLPDEEKLQGRGV) is disordered.

This sequence belongs to the PdxS/SNZ family. In terms of assembly, in the presence of PdxT, forms a dodecamer of heterodimers.

It carries out the reaction aldehydo-D-ribose 5-phosphate + D-glyceraldehyde 3-phosphate + L-glutamine = pyridoxal 5'-phosphate + L-glutamate + phosphate + 3 H2O + H(+). Its pathway is cofactor biosynthesis; pyridoxal 5'-phosphate biosynthesis. Its function is as follows. Catalyzes the formation of pyridoxal 5'-phosphate from ribose 5-phosphate (RBP), glyceraldehyde 3-phosphate (G3P) and ammonia. The ammonia is provided by the PdxT subunit. Can also use ribulose 5-phosphate and dihydroxyacetone phosphate as substrates, resulting from enzyme-catalyzed isomerization of RBP and G3P, respectively. The sequence is that of Pyridoxal 5'-phosphate synthase subunit PdxS from Halorubrum lacusprofundi (strain ATCC 49239 / DSM 5036 / JCM 8891 / ACAM 34).